A 346-amino-acid chain; its full sequence is Ribosomal RNA small subunit methyltransferase H (346 aa).

S-adenosyl-L-methionine-binding positions include 53 to 55 (GGY), Asp70, Phe97, Asp114, and Gln121.

This sequence belongs to the methyltransferase superfamily. RsmH family.

Its subcellular location is the cytoplasm. The enzyme catalyses cytidine(1402) in 16S rRNA + S-adenosyl-L-methionine = N(4)-methylcytidine(1402) in 16S rRNA + S-adenosyl-L-homocysteine + H(+). Specifically methylates the N4 position of cytidine in position 1402 (C1402) of 16S rRNA. The chain is Ribosomal RNA small subunit methyltransferase H from Bartonella henselae (strain ATCC 49882 / DSM 28221 / CCUG 30454 / Houston 1) (Rochalimaea henselae).